Consider the following 400-residue polypeptide: Putative cytochrome P450 133B2 (400 aa).

Cysteine 348 contributes to the heme binding site.

Belongs to the cytochrome P450 family. The cofactor is heme.

In Xylella fastidiosa (strain 9a5c), this protein is Putative cytochrome P450 133B2 (cyp133B2).